Consider the following 463-residue polypeptide: Bifunctional protein HldE (463 aa).

Residues 1-311 (MKKILVVGDL…EEIALILNQT (311 aa)) are ribokinase. 191–194 (NRFE) is an ATP binding site. The active site involves Asp260. Residues 334–463 (FTNGCFDLLH…IEKIKRTCND (130 aa)) form a cytidylyltransferase region.

This sequence in the N-terminal section; belongs to the carbohydrate kinase PfkB family. The protein in the C-terminal section; belongs to the cytidylyltransferase family. As to quaternary structure, homodimer.

It catalyses the reaction D-glycero-beta-D-manno-heptose 7-phosphate + ATP = D-glycero-beta-D-manno-heptose 1,7-bisphosphate + ADP + H(+). It carries out the reaction D-glycero-beta-D-manno-heptose 1-phosphate + ATP + H(+) = ADP-D-glycero-beta-D-manno-heptose + diphosphate. It participates in nucleotide-sugar biosynthesis; ADP-L-glycero-beta-D-manno-heptose biosynthesis; ADP-L-glycero-beta-D-manno-heptose from D-glycero-beta-D-manno-heptose 7-phosphate: step 1/4. Its pathway is nucleotide-sugar biosynthesis; ADP-L-glycero-beta-D-manno-heptose biosynthesis; ADP-L-glycero-beta-D-manno-heptose from D-glycero-beta-D-manno-heptose 7-phosphate: step 3/4. Functionally, catalyzes the phosphorylation of D-glycero-D-manno-heptose 7-phosphate at the C-1 position to selectively form D-glycero-beta-D-manno-heptose-1,7-bisphosphate. Its function is as follows. Catalyzes the ADP transfer from ATP to D-glycero-beta-D-manno-heptose 1-phosphate, yielding ADP-D-glycero-beta-D-manno-heptose. This Helicobacter pylori (strain G27) protein is Bifunctional protein HldE.